The sequence spans 268 residues: WUSCHEL-related homeobox 11 (268 aa).

The segment at 1 to 35 (MDQEQTPHSPTRHSRSPPSSASGSTSAEPVRSRWS) is disordered. The segment covering 16–27 (SPPSSASGSTSA) has biased composition (low complexity). Positions 29 to 93 (PVRSRWSPKP…NRRSRSRRRQ (65 aa)) form a DNA-binding region, homeobox; WUS-type.

Belongs to the WUS homeobox family.

The protein localises to the nucleus. In terms of biological role, transcription factor which may be involved in developmental processes. In Arabidopsis thaliana (Mouse-ear cress), this protein is WUSCHEL-related homeobox 11 (WOX11).